The following is a 216-amino-acid chain: Soluble inorganic pyrophosphatase 3 (216 aa).

Residues 1–10 (MSEEAYEETQ) are compositionally biased toward acidic residues. The segment at 1–21 (MSEEAYEETQESSQSPRPVPK) is disordered. Lys66 and Arg80 together coordinate substrate. Residue Tyr88 is the Proton donor of the active site. Tyr92 contributes to the substrate binding site. The Mg(2+) site is built by Asp102, Asp107, and Asp139. Position 176 (Tyr176) interacts with substrate.

This sequence belongs to the PPase family. Mg(2+) is required as a cofactor. In terms of tissue distribution, expressed preferentially in stamen, pollen and flower, and at a low level in lateral roots and root elongation zones.

It is found in the cytoplasm. It carries out the reaction diphosphate + H2O = 2 phosphate + H(+). The chain is Soluble inorganic pyrophosphatase 3 from Arabidopsis thaliana (Mouse-ear cress).